Here is a 372-residue protein sequence, read N- to C-terminus: MNLSSLPHRLLAAAVALCAIAAPASAERIKDLAQVGGVRGNALVGYGLVVGLDGSGDRTSQAPFTVQSLKNLLGELGVNVPANVNPQLKNVAAVAIHAELPPFAKPGQPIDITVSSIANAVSLRGGSLLMAPLKGADGQVYAMAQGNLVVGGFGAQGKDGSRVSVNIPSVGRIPNGATVERALPDVFAGSGEITLNLHQNDFTTVSRMVAAIDNSFGAGTARAVDGVTVSVRSPTDPSARIGLLARLENVELSPGDAPAKVVVNARTGTVVIGQLVRVMPAAIAHGSLTVTISENTNVSQPGAFSGGRTAVTPQSTIKATSEGSRMFKFEGGTTLDQIVRAVNEVGAAPGDLVAILEALKQAGALTAELEVI.

An N-terminal signal peptide occupies residues 1–26 (MNLSSLPHRLLAAAVALCAIAAPASA).

The protein belongs to the FlgI family. As to quaternary structure, the basal body constitutes a major portion of the flagellar organelle and consists of four rings (L,P,S, and M) mounted on a central rod.

Its subcellular location is the periplasm. The protein localises to the bacterial flagellum basal body. In terms of biological role, assembles around the rod to form the L-ring and probably protects the motor/basal body from shearing forces during rotation. This is Flagellar P-ring protein from Xanthomonas campestris pv. campestris (strain ATCC 33913 / DSM 3586 / NCPPB 528 / LMG 568 / P 25).